Here is a 120-residue protein sequence, read N- to C-terminus: MSRVKSGKVTHARHRKVIKAAKGYYAARSTNFRTATQAVDKANQYATRDRKARKRNFRALWIQRINAAVRLFDLEMTYSRFINGLAKAGIEVDRKVLADLAVHEPEAFNAIAARAKAALA.

Belongs to the bacterial ribosomal protein bL20 family.

Binds directly to 23S ribosomal RNA and is necessary for the in vitro assembly process of the 50S ribosomal subunit. It is not involved in the protein synthesizing functions of that subunit. This Cereibacter sphaeroides (strain ATCC 17025 / ATH 2.4.3) (Rhodobacter sphaeroides) protein is Large ribosomal subunit protein bL20.